A 155-amino-acid chain; its full sequence is Endoribonuclease YbeY (155 aa).

Zn(2+) contacts are provided by His-114, His-118, and His-124.

Belongs to the endoribonuclease YbeY family. It depends on Zn(2+) as a cofactor.

Its subcellular location is the cytoplasm. Functionally, single strand-specific metallo-endoribonuclease involved in late-stage 70S ribosome quality control and in maturation of the 3' terminus of the 16S rRNA. The polypeptide is Endoribonuclease YbeY (Photorhabdus laumondii subsp. laumondii (strain DSM 15139 / CIP 105565 / TT01) (Photorhabdus luminescens subsp. laumondii)).